The following is a 138-amino-acid chain: Cysteine desulfuration protein SufE (138 aa).

Residue cysteine 51 is the Cysteine persulfide intermediate of the active site.

Belongs to the SufE family. As to quaternary structure, homodimer. Interacts with SufS.

The protein localises to the cytoplasm. It functions in the pathway cofactor biosynthesis; iron-sulfur cluster biosynthesis. Participates in cysteine desulfuration mediated by SufS. Cysteine desulfuration mobilizes sulfur from L-cysteine to yield L-alanine and constitutes an essential step in sulfur metabolism for biosynthesis of a variety of sulfur-containing biomolecules. Functions as a sulfur acceptor for SufS, by mediating the direct transfer of the sulfur atom from the S-sulfanylcysteine of SufS, an intermediate product of cysteine desulfuration process. In Cronobacter sakazakii (strain ATCC BAA-894) (Enterobacter sakazakii), this protein is Cysteine desulfuration protein SufE.